The following is a 286-amino-acid chain: 2-hydroxy-6-oxo-6-phenylhexa-2,4-dienoate hydrolase (286 aa).

One can recognise an AB hydrolase-1 domain in the interval 36 to 271 (VIMLHGGGPG…KCGHWAQWEH (236 aa)). Substrate-binding positions include 42–43 (GG), asparagine 51, asparagine 111, serine 180, and arginine 190. Histidine 265 serves as the catalytic Proton acceptor. Substrate is bound at residue tryptophan 266.

It belongs to the AB hydrolase superfamily. BphD family. As to quaternary structure, homodimer.

The catalysed reaction is 2,6-dioxo-6-phenylhexa-3-enoate + H2O = 2-oxopent-4-enoate + benzoate + H(+). It functions in the pathway xenobiotic degradation; biphenyl degradation; 2-hydroxy-2,4-pentadienoate and benzoate from biphenyl: step 4/4. Its function is as follows. Catalyzes an unusual C-C bond hydrolysis of 2-hydroxy-6-oxo-6-phenylhexa-2,4-dienoic acid (HOPDA) to produce benzoic acid and 2-hydroxy-2,4-pentadienoic acid (HPD). This is 2-hydroxy-6-oxo-6-phenylhexa-2,4-dienoate hydrolase (bphD) from Metapseudomonas furukawaii (Pseudomonas furukawaii).